Reading from the N-terminus, the 224-residue chain is Uracil phosphoribosyltransferase (224 aa).

GTP is bound at residue 38 to 42 (KGLVK). Residues Arg87, Arg112, and 140–148 (DPMIATGST) each bind 5-phospho-alpha-D-ribose 1-diphosphate. Uracil-binding positions include Ile204 and 209–211 (GDA). Asp210 is a binding site for 5-phospho-alpha-D-ribose 1-diphosphate.

This sequence belongs to the UPRTase family. Mg(2+) serves as cofactor.

It carries out the reaction UMP + diphosphate = 5-phospho-alpha-D-ribose 1-diphosphate + uracil. It functions in the pathway pyrimidine metabolism; UMP biosynthesis via salvage pathway; UMP from uracil: step 1/1. Allosterically activated by GTP. In terms of biological role, catalyzes the conversion of uracil and 5-phospho-alpha-D-ribose 1-diphosphate (PRPP) to UMP and diphosphate. The protein is Uracil phosphoribosyltransferase of Thermococcus gammatolerans (strain DSM 15229 / JCM 11827 / EJ3).